A 279-amino-acid chain; its full sequence is Tryptophan synthase alpha chain (279 aa).

Residues E50 and D61 each act as proton acceptor in the active site.

This sequence belongs to the TrpA family. In terms of assembly, tetramer of two alpha and two beta chains.

It catalyses the reaction (1S,2R)-1-C-(indol-3-yl)glycerol 3-phosphate + L-serine = D-glyceraldehyde 3-phosphate + L-tryptophan + H2O. The protein operates within amino-acid biosynthesis; L-tryptophan biosynthesis; L-tryptophan from chorismate: step 5/5. The alpha subunit is responsible for the aldol cleavage of indoleglycerol phosphate to indole and glyceraldehyde 3-phosphate. The polypeptide is Tryptophan synthase alpha chain (Brucella suis biovar 1 (strain 1330)).